The primary structure comprises 158 residues: MSLNLPGYALFFILLVASSGAKPAPDLQILEPPLSSLEEQEEMQEEVQEKVQEQQEEVQEKVQEQQEEVQEQQEEVQEQQEEQQEEVQERGRGTGDVLLRAQLDSSTWALQKDDVLMRLFKDLLRTSKRSRSRYKKGGLRSCFGVRLARIGSFSGLGC.

The first 21 residues, 1-21, serve as a signal peptide directing secretion; sequence MSLNLPGYALFFILLVASSGA. Positions 22 to 136 are excised as a propeptide; sequence KPAPDLQILE…SKRSRSRYKK (115 aa). The segment at 32–95 is disordered; it reads PPLSSLEEQE…EVQERGRGTG (64 aa). Positions 47–64 are enriched in basic and acidic residues; that stretch reads VQEKVQEQQEEVQEKVQE. The segment covering 65 to 86 has biased composition (acidic residues); that stretch reads QQEEVQEQQEEVQEQQEEQQEE. C142 and C158 are disulfide-bonded.

Belongs to the natriuretic peptide family.

The protein resides in the secreted. Exhibits natriuretic and vasodepressant activity. Has cGMP-stimulating activity. May help to regulate body fluid homeostasis in a variety of aquatic environments. In Takifugu rubripes (Japanese pufferfish), this protein is C-type natriuretic peptide 3.